A 421-amino-acid polypeptide reads, in one-letter code: Gamma-glutamyl phosphate reductase (421 aa).

It belongs to the gamma-glutamyl phosphate reductase family.

Its subcellular location is the cytoplasm. The enzyme catalyses L-glutamate 5-semialdehyde + phosphate + NADP(+) = L-glutamyl 5-phosphate + NADPH + H(+). It participates in amino-acid biosynthesis; L-proline biosynthesis; L-glutamate 5-semialdehyde from L-glutamate: step 2/2. Catalyzes the NADPH-dependent reduction of L-glutamate 5-phosphate into L-glutamate 5-semialdehyde and phosphate. The product spontaneously undergoes cyclization to form 1-pyrroline-5-carboxylate. In Acinetobacter baumannii (strain AYE), this protein is Gamma-glutamyl phosphate reductase.